The sequence spans 503 residues: Palmitoleoyl-protein carboxylesterase NOTUM (503 aa).

Positions 1–19 (MGGEVRVLLLLGLLHWVGG) are cleaved as a signal peptide. The segment at 23-53 (RKTWRRRGQQPPQPPPPPPLPQRAEVEPGAG) is disordered. Positions 33–43 (PPQPPPPPPLP) are enriched in pro residues. Ser88 bears the Phosphoserine mark. Asn103 carries an N-linked (GlcNAc...) asparagine glycan. Residues Ser239, Asp347, and His396 each act as charge relay system in the active site.

It belongs to the pectinacetylesterase family. Notum subfamily. As to expression, widely expressed. Expressed in lung, ovary, kidney, liver and brain. Not detected in thymus, heart, spleen, stomach, skeletal muscle and bone marrow.

It localises to the secreted. The enzyme catalyses [Wnt protein]-O-(9Z)-hexadecenoyl-L-serine + H2O = [Wnt protein]-L-serine + (9Z)-hexadecenoate + H(+). In terms of biological role, carboxylesterase that acts as a key negative regulator of the Wnt signaling pathway by specifically mediating depalmitoleoylation of WNT proteins. Serine palmitoleoylation of WNT proteins is required for efficient binding to frizzled receptors. This chain is Palmitoleoyl-protein carboxylesterase NOTUM, found in Mus musculus (Mouse).